We begin with the raw amino-acid sequence, 309 residues long: UDP-URONIC ACID TRANSPORTER 1 (309 aa).

A run of 10 helical transmembrane segments spans residues 9 to 29, 43 to 63, 78 to 98, 104 to 124, 131 to 151, 152 to 172, 193 to 213, 231 to 251, 256 to 278, and 283 to 302; these read TLFI…VLLL, IFLT…SIVF, FLKV…GNIS, VSFN…FAYL, AWVT…ASGG, EPGF…ARAF, LMLY…LFME, WILL…NFLV, SALT…SILI, and VTVM…VAYG.

Belongs to the TPT transporter family. TPT (TC 2.A.7.9) subfamily. As to expression, ubiquitous.

It is found in the golgi apparatus membrane. Its function is as follows. UDP-glucuronic acid transporter that modulates the polysaccharide composition of seed mucilage. Transports UDP-glucuronic acid (UDP-GlcA) and UDP-galacturonic acid (UDP-GalA) in vitro. The chain is UDP-URONIC ACID TRANSPORTER 1 from Arabidopsis thaliana (Mouse-ear cress).